We begin with the raw amino-acid sequence, 464 residues long: Bifunctional protein GlmU (464 aa).

The pyrophosphorylase stretch occupies residues 1–236 (MRAVILAAGL…PTEALGVNTR (236 aa)). Residues 6–9 (LAAG), Lys20, and 77–78 (GT) contribute to the UDP-N-acetyl-alpha-D-glucosamine site. Asp102 contacts Mg(2+). The UDP-N-acetyl-alpha-D-glucosamine site is built by Gly145, Glu161, Asn176, and Asn234. A Mg(2+)-binding site is contributed by Asn234. Positions 237–257 (WDLALVENVIKLKIARYWAER) are linker. Residues 258–464 (GVTVHYPETV…GRGKKKLQKD (207 aa)) are N-acetyltransferase. Residues Arg340 and Lys358 each contribute to the UDP-N-acetyl-alpha-D-glucosamine site. The active-site Proton acceptor is the His370. Tyr373 and Asn384 together coordinate UDP-N-acetyl-alpha-D-glucosamine. Acetyl-CoA contacts are provided by residues Ala387, 393–394 (NY), Ser412, Gly430, and Arg447.

In the N-terminal section; belongs to the N-acetylglucosamine-1-phosphate uridyltransferase family. It in the C-terminal section; belongs to the transferase hexapeptide repeat family. Homotrimer. Mg(2+) serves as cofactor.

The protein localises to the cytoplasm. The catalysed reaction is alpha-D-glucosamine 1-phosphate + acetyl-CoA = N-acetyl-alpha-D-glucosamine 1-phosphate + CoA + H(+). It carries out the reaction N-acetyl-alpha-D-glucosamine 1-phosphate + UTP + H(+) = UDP-N-acetyl-alpha-D-glucosamine + diphosphate. The protein operates within nucleotide-sugar biosynthesis; UDP-N-acetyl-alpha-D-glucosamine biosynthesis; N-acetyl-alpha-D-glucosamine 1-phosphate from alpha-D-glucosamine 6-phosphate (route II): step 2/2. It participates in nucleotide-sugar biosynthesis; UDP-N-acetyl-alpha-D-glucosamine biosynthesis; UDP-N-acetyl-alpha-D-glucosamine from N-acetyl-alpha-D-glucosamine 1-phosphate: step 1/1. Its pathway is bacterial outer membrane biogenesis; LPS lipid A biosynthesis. In terms of biological role, catalyzes the last two sequential reactions in the de novo biosynthetic pathway for UDP-N-acetylglucosamine (UDP-GlcNAc). The C-terminal domain catalyzes the transfer of acetyl group from acetyl coenzyme A to glucosamine-1-phosphate (GlcN-1-P) to produce N-acetylglucosamine-1-phosphate (GlcNAc-1-P), which is converted into UDP-GlcNAc by the transfer of uridine 5-monophosphate (from uridine 5-triphosphate), a reaction catalyzed by the N-terminal domain. In Aquifex aeolicus (strain VF5), this protein is Bifunctional protein GlmU.